Reading from the N-terminus, the 432-residue chain is Adenylosuccinate synthetase (432 aa).

Residues 12–18 (GDEGKGK) and 40–42 (GHT) each bind GTP. Asp-13 functions as the Proton acceptor in the catalytic mechanism. Asp-13 and Gly-40 together coordinate Mg(2+). Residues 13-16 (DEGK), 38-41 (NAGH), Thr-129, Arg-143, Gln-224, Thr-239, and Arg-303 contribute to the IMP site. The active-site Proton donor is His-41. 299 to 305 (VTTGRRR) contacts substrate. Residues Arg-305, 331–333 (KLD), and 413–415 (GVG) contribute to the GTP site.

The protein belongs to the adenylosuccinate synthetase family. In terms of assembly, homodimer. Requires Mg(2+) as cofactor.

The protein resides in the cytoplasm. It catalyses the reaction IMP + L-aspartate + GTP = N(6)-(1,2-dicarboxyethyl)-AMP + GDP + phosphate + 2 H(+). It functions in the pathway purine metabolism; AMP biosynthesis via de novo pathway; AMP from IMP: step 1/2. Plays an important role in the de novo pathway of purine nucleotide biosynthesis. Catalyzes the first committed step in the biosynthesis of AMP from IMP. The sequence is that of Adenylosuccinate synthetase from Mycobacterium leprae (strain TN).